The chain runs to 296 residues: Beta-lactamase (296 aa).

A signal peptide spans 1–21 (MKAYFIAILTLFTCIATVVRA). The active-site Acyl-ester intermediate is the Ser66. Residue 235 to 237 (KTG) coordinates substrate.

The protein belongs to the class-A beta-lactamase family.

The catalysed reaction is a beta-lactam + H2O = a substituted beta-amino acid. The protein is Beta-lactamase (cblA) of Bacteroides uniformis.